The primary structure comprises 193 residues: MTITRQDAWTQDEDLLLAEVVLRHIREGGTQLSAFEEVGRALTRTAAACGFRWNSYVRKQYQSGIELAKKQRKELRKQIGVHSVNMPNSMKQTASASSEGKRDLSIQDVIQFLEQFKETPSAQEFQLEREKLKEQIQSLQKELEDLRSENQTLRNQLEMTEEDYKALIDIMDRARKMVVSKEDGRMKKAAQET.

Positions 1–61 constitute an HTH myb-type domain; that stretch reads MTITRQDAWT…RWNSYVRKQY (61 aa). Positions 35–57 form a DNA-binding region, H-T-H motif; the sequence is FEEVGRALTRTAAACGFRWNSYV. Residues 122–177 adopt a coiled-coil conformation; that stretch reads AQEFQLEREKLKEQIQSLQKELEDLRSENQTLRNQLEMTEEDYKALIDIMDRARKM.

The protein belongs to the RsfA transcriptional regulator family.

Its function is as follows. Transcriptional factor that regulates the expression of several late sporulation genes. Controls genes of both sigma-E and sigma-K regulons, acting alone on some genes and in conjunction with SpoIIID or GerE on others. Regulates, directly or indirectly, the expression of genes encoding coat proteins such as cgeA, cotB, cotC, cotG, cotU and cotY. Controls late sporulation genes in two ways: directly, by binding to the promoter region of genes such as cotB, cotU and spoVIF, and acting directly on their transcription, and indirectly, through the activation of SpoVIF, which stabilizes the transcriptional activator GerE and consequently induces the expression of the GerE-dependent genes, such as cotC and cotG. Its effect is strongly positive on spoVIF, cotC, and cotG, weakly positive on cotB, and negative on cotU. This is Sporulation-specific transcriptional regulator GerR from Bacillus subtilis (strain 168).